A 533-amino-acid chain; its full sequence is Invertase (533 aa).

The signal sequence occupies residues 1-22 (MVQVLSVLVIPLLTLFFGYVAS). Residues 47–50 (WMND) and glutamine 68 each bind substrate. The active site involves aspartate 50. Residue asparagine 72 is glycosylated (N-linked (GlcNAc...) asparagine). Residue 110–111 (FS) participates in substrate binding. Asparagine 119, asparagine 120, and asparagine 126 each carry an N-linked (GlcNAc...) asparagine glycan. 178–179 (RD) lines the substrate pocket. A glycan (N-linked (GlcNAc...) asparagine) is linked at asparagine 219. Tryptophan 314 contacts substrate. Asparagine 334, asparagine 392, and asparagine 419 each carry an N-linked (GlcNAc...) asparagine glycan.

The protein belongs to the glycosyl hydrolase 32 family.

The enzyme catalyses Hydrolysis of terminal non-reducing beta-D-fructofuranoside residues in beta-D-fructofuranosides.. The polypeptide is Invertase (INV) (Schwanniomyces occidentalis (Yeast)).